The primary structure comprises 131 residues: Actin-associated protein FAM107A (131 aa).

The stretch at 57–77 forms a coiled coil; that stretch reads VLEHRRRNQLIKKKEEELEAK. The short motif at 61–71 is the Nuclear localization signal element; that stretch reads RRRNQLIKKKE.

In terms of assembly, interacts with ACTB. Interacts with COMMD1; this interaction stabilizes COMMD1 in the nucleus. Interacts with MAP1A. Interacts with PRDX1. Interacts with F-actin.

Its subcellular location is the nucleus. It localises to the cytoplasm. The protein resides in the cytoskeleton. It is found in the stress fiber. The protein localises to the cell junction. Its subcellular location is the focal adhesion. It localises to the cell projection. The protein resides in the ruffle membrane. It is found in the synapse. Stress-inducible actin-binding protein that plays a role in synaptic and cognitive functions by modulating actin filamentous (F-actin) dynamics. Mediates polymerization of globular actin to F-actin. Also binds to, stabilizes and bundles F-actin. Involved in synaptic function by regulating neurite outgrowth in an actin-dependent manner and for the acquisition of hippocampus-dependent cognitive function, such as learning and long-term memory. Plays a role in the actin and microtubule cytoskeleton organization; negatively regulates focal adhesion (FA) assembly promoting malignant glial cell migration in an actin-, microtubule- and MAP1A-dependent manner. Also involved in neuroblastoma G1/S phase cell cycle progression and cell proliferation inhibition by stimulating ubiquitination of NF-kappa-B subunit RELA and NF-kappa-B degradation in a COMMD1- and actin-dependent manner. May play a role in tumor development. The protein is Actin-associated protein FAM107A of Rattus norvegicus (Rat).